The following is a 351-amino-acid chain: Protein-glutamate methylesterase/protein-glutamine glutaminase (351 aa).

In terms of domain architecture, Response regulatory spans Arg6–Lys123. Asp57 bears the 4-aspartylphosphate mark. One can recognise a CheB-type methylesterase domain in the interval Tyr154 to Arg346. Residues Ser166, His192, and Asp288 contribute to the active site.

This sequence belongs to the CheB family. Post-translationally, phosphorylated by CheA. Phosphorylation of the N-terminal regulatory domain activates the methylesterase activity.

It is found in the cytoplasm. It catalyses the reaction [protein]-L-glutamate 5-O-methyl ester + H2O = L-glutamyl-[protein] + methanol + H(+). The enzyme catalyses L-glutaminyl-[protein] + H2O = L-glutamyl-[protein] + NH4(+). Its function is as follows. Involved in chemotaxis. Part of a chemotaxis signal transduction system that modulates chemotaxis in response to various stimuli. Catalyzes the demethylation of specific methylglutamate residues introduced into the chemoreceptors (methyl-accepting chemotaxis proteins or MCP) by CheR. Also mediates the irreversible deamidation of specific glutamine residues to glutamic acid. The polypeptide is Protein-glutamate methylesterase/protein-glutamine glutaminase (Agrobacterium fabrum (strain C58 / ATCC 33970) (Agrobacterium tumefaciens (strain C58))).